An 85-amino-acid polypeptide reads, in one-letter code: Sec-independent protein translocase protein TatA (85 aa).

A helical transmembrane segment spans residues 1–21 (MAGLQGWQLVIIILLAILLFA). The segment at 43 to 85 (VKQMRTEGKDAKDERSGTGSTAADEPVEGRVVDRDETDPRDQR) is disordered. Composition is skewed to basic and acidic residues over residues 44–58 (KQMR…DERS) and 69–85 (VEGR…RDQR).

It belongs to the TatA/E family. As to quaternary structure, the Tat system comprises two distinct complexes: a TatABC complex, containing multiple copies of TatA, TatB and TatC subunits, and a separate TatA complex, containing only TatA subunits. Substrates initially bind to the TatABC complex, which probably triggers association of the separate TatA complex to form the active translocon.

The protein localises to the cell membrane. Functionally, part of the twin-arginine translocation (Tat) system that transports large folded proteins containing a characteristic twin-arginine motif in their signal peptide across membranes. TatA could form the protein-conducting channel of the Tat system. The chain is Sec-independent protein translocase protein TatA from Micrococcus luteus (strain ATCC 4698 / DSM 20030 / JCM 1464 / CCM 169 / CCUG 5858 / IAM 1056 / NBRC 3333 / NCIMB 9278 / NCTC 2665 / VKM Ac-2230) (Micrococcus lysodeikticus).